The chain runs to 792 residues: Genome polyprotein (792 aa).

Positions 1 to 15 are interaction with host EXOC1; it reads MNNQRKKTGNPSFNM. At 1–101 the chain is on the cytoplasmic side; the sequence is MNNQRKKTGN…LNIMNRRRRS (101 aa). The segment at 37 to 72 is hydrophobic; homodimerization of capsid protein C; sequence LLSGQGPMKLVMAFVAFLRFLAIPPTAGILKRWGSF. Residues 101-114 constitute a propeptide, ER anchor for the capsid protein C, removed in mature form by serine protease NS3; that stretch reads SVTMILMLLPTALA. Residues 102-119 traverse the membrane as a helical segment; it reads VTMILMLLPTALAFHLTT. At 120–242 the chain is on the extracellular side; that stretch reads RGGEPTLIVS…QIQKVETWAL (123 aa). N-linked (GlcNAc...) asparagine; by host glycosylation is present at asparagine 183. The helical transmembrane segment at 243–260 threads the bilayer; the sequence is RHPGFTVIGLFLAHAIGT. Position 261 (serine 261) is a topological domain, cytoplasmic. A helical transmembrane segment spans residues 262 to 280; sequence ITQKGIIFILLMLVTPSMA. Over 281–725 the chain is Extracellular; that stretch reads MRCVGIGNRD…IHQIFGTAYG (445 aa). Intrachain disulfides connect cysteine 283/cysteine 310, cysteine 340/cysteine 401, cysteine 354/cysteine 385, and cysteine 372/cysteine 396. The N-linked (GlcNAc...) asparagine; by host glycan is linked to asparagine 347. Positions 378–391 are fusion peptide; the sequence is DRGWGNGCGLFGKG. A glycan (N-linked (GlcNAc...) asparagine; by host) is linked at asparagine 433. Cystine bridges form between cysteine 465–cysteine 565 and cysteine 582–cysteine 613. A helical transmembrane segment spans residues 726-746; that stretch reads VLFSGVSWTMKIGIGILLTWL. Over 747–752 the chain is Cytoplasmic; the sequence is GLNSRS. A helical transmembrane segment spans residues 753–775; the sequence is TSLSMTCIAVGMVTLYLGVMVQA. The Extracellular segment spans residues 776–792; that stretch reads DSGCVINWKGKELKCGS. Cysteines 779 and 790 form a disulfide.

Homodimer. Interacts (via N-terminus) with host EXOC1 (via C-terminus); this interaction results in EXOC1 degradation through the proteasome degradation pathway. In terms of assembly, forms heterodimers with envelope protein E in the endoplasmic reticulum and Golgi. As to quaternary structure, homodimer; in the endoplasmic reticulum and Golgi. Interacts with protein prM. Interacts with non-structural protein 1. Homodimer; Homohexamer when secreted. Interacts with envelope protein E. Post-translationally, specific enzymatic cleavages in vivo yield mature proteins. Cleavages in the lumen of endoplasmic reticulum are performed by host signal peptidase, wereas cleavages in the cytoplasmic side are performed by serine protease NS3. Signal cleavage at the 2K-4B site requires a prior NS3 protease-mediated cleavage at the 4A-2K site. In terms of processing, N-glycosylated. N-glycosylated. The excreted form is glycosylated and this is required for efficient secretion of the protein from infected cells.

It is found in the virion. It localises to the host nucleus. Its subcellular location is the host cytoplasm. The protein localises to the host perinuclear region. The protein resides in the secreted. It is found in the virion membrane. It localises to the host endoplasmic reticulum membrane. Functionally, plays a role in virus budding by binding to the cell membrane and gathering the viral RNA into a nucleocapsid that forms the core of a mature virus particle. During virus entry, may induce genome penetration into the host cytoplasm after hemifusion induced by the surface proteins. Can migrate to the cell nucleus where it modulates host functions. Overcomes the anti-viral effects of host EXOC1 by sequestering and degrading the latter through the proteasome degradation pathway. In terms of biological role, inhibits RNA silencing by interfering with host Dicer. Prevents premature fusion activity of envelope proteins in trans-Golgi by binding to envelope protein E at pH6.0. After virion release in extracellular space, gets dissociated from E dimers. Its function is as follows. Acts as a chaperone for envelope protein E during intracellular virion assembly by masking and inactivating envelope protein E fusion peptide. prM is the only viral peptide matured by host furin in the trans-Golgi network probably to avoid catastrophic activation of the viral fusion activity in acidic Golgi compartment prior to virion release. prM-E cleavage is inefficient, and many virions are only partially matured. These uncleaved prM would play a role in immune evasion. Functionally, may play a role in virus budding. Exerts cytotoxic effects by activating a mitochondrial apoptotic pathway through M ectodomain. May display a viroporin activity. In terms of biological role, binds to host cell surface receptor and mediates fusion between viral and cellular membranes. Envelope protein is synthesized in the endoplasmic reticulum in the form of heterodimer with protein prM. They play a role in virion budding in the ER, and the newly formed immature particle is covered with 60 spikes composed of heterodimer between precursor prM and envelope protein E. The virion is transported to the Golgi apparatus where the low pH causes dissociation of PrM-E heterodimers and formation of E homodimers. prM-E cleavage is inefficient, and many virions are only partially matured. These uncleaved prM would play a role in immune evasion. Involved in immune evasion, pathogenesis and viral replication. Once cleaved off the polyprotein, is targeted to three destinations: the viral replication cycle, the plasma membrane and the extracellular compartment. Essential for viral replication. Required for formation of the replication complex and recruitment of other non-structural proteins to the ER-derived membrane structures. Excreted as a hexameric lipoparticle that plays a role against host immune response. Antagonizing the complement function. Binds to the host macrophages and dendritic cells. Inhibits signal transduction originating from Toll-like receptor 3 (TLR3). Its function is as follows. Disrupts the host endothelial glycocalyx layer of host pulmonary microvascular endothelial cells, inducing degradation of sialic acid and shedding of heparan sulfate proteoglycans. NS1 induces expression of sialidases, heparanase, and activates cathepsin L, which activates heparanase via enzymatic cleavage. These effects are probably linked to the endothelial hyperpermeability observed in severe dengue disease. The polypeptide is Genome polyprotein (Aedes aegypti (Yellowfever mosquito)).